The following is a 436-amino-acid chain: RNA polymerase sigma-54 factor (436 aa).

The H-T-H motif DNA-binding region spans 324–343 (TLREVADCLSLHESTVSRAI). The short motif at 413 to 421 (SRRTVAKYR) is the RPON box element.

This sequence belongs to the sigma-54 factor family. Interacts transiently with the RNAP core.

In terms of biological role, sigma factors are initiation factors that promote the attachment of RNA polymerase (RNAP) to specific initiation sites and are then released. This sigma factor is responsible for the expression of the levanase operon. The open complex (sigma-54 and core RNA polymerase) serves as the receptor for receipt of the melting signal from the remotely bound activator protein LevR for the expression of the levanase operon. Associates with the RNAP core only in stationary phase cells. The chain is RNA polymerase sigma-54 factor (sigL) from Bacillus subtilis (strain 168).